A 443-amino-acid polypeptide reads, in one-letter code: Glucose-6-phosphate isomerase (443 aa).

The active-site Proton donor is glutamate 285. Residues histidine 306 and lysine 420 contribute to the active site.

The protein belongs to the GPI family.

It localises to the cytoplasm. The enzyme catalyses alpha-D-glucose 6-phosphate = beta-D-fructose 6-phosphate. It participates in carbohydrate biosynthesis; gluconeogenesis. The protein operates within carbohydrate degradation; glycolysis; D-glyceraldehyde 3-phosphate and glycerone phosphate from D-glucose: step 2/4. In terms of biological role, catalyzes the reversible isomerization of glucose-6-phosphate to fructose-6-phosphate. The polypeptide is Glucose-6-phosphate isomerase (Staphylococcus saprophyticus subsp. saprophyticus (strain ATCC 15305 / DSM 20229 / NCIMB 8711 / NCTC 7292 / S-41)).